Reading from the N-terminus, the 944-residue chain is UvrABC system protein A (944 aa).

33–40 (GLSGSGKS) serves as a coordination point for ATP. The C4-type zinc finger occupies 252 to 279 (CPICGFSIGELEPRMFSFNSPFGACPTC). ABC transporter domains lie at 309 to 587 (WEPT…KKSL) and 607 to 935 (ITDR…QYLK). Residue 639–646 (GVSGSGKS) participates in ATP binding. Residues 738 to 764 (CEACKGDGIIKIEMHFLPDVYVPCEVC) form a C4-type zinc finger.

Belongs to the ABC transporter superfamily. UvrA family. As to quaternary structure, forms a heterotetramer with UvrB during the search for lesions.

The protein resides in the cytoplasm. In terms of biological role, the UvrABC repair system catalyzes the recognition and processing of DNA lesions. UvrA is an ATPase and a DNA-binding protein. A damage recognition complex composed of 2 UvrA and 2 UvrB subunits scans DNA for abnormalities. When the presence of a lesion has been verified by UvrB, the UvrA molecules dissociate. This chain is UvrABC system protein A, found in Staphylococcus epidermidis (strain ATCC 35984 / DSM 28319 / BCRC 17069 / CCUG 31568 / BM 3577 / RP62A).